The primary structure comprises 25 residues: ITAGFISSSANTVYVKKGDVMVFPR.

This sequence belongs to the germin family.

The polypeptide is Germin-like protein (Populus euphratica (Euphrates poplar)).